We begin with the raw amino-acid sequence, 106 residues long: uncharacterized protein (106 aa).

This is an uncharacterized protein from Homo sapiens (Human).